The sequence spans 278 residues: MEVRQSIHSDHAKQLDTAGLRREFLIDTVFDADRYTMVYSHIDRIIVGGIMPVTQSVSIGNEVGKQLGVGYFLERRELGVINIGGPGTIDVDGKCYEIGPREALYVGQGARDLRFASLDSACPAKFYYNCAPAHTHYPNRKITPAEVSPQTLGDTKSSNRRTINKYMVPEVLPTCQLSMGLTELEEGNLWNTMPCHTHERRMEVYFYFNMAPDSCVFHMMGEPQETRHIVMRNEQAVISPSWSIHSGVGTRAYTFIWGMVGENQVFDDMDHLAITDLR.

His196, His198, Glu203, and His245 together coordinate Zn(2+).

Belongs to the KduI family. It depends on Zn(2+) as a cofactor.

The enzyme catalyses 5-dehydro-4-deoxy-D-glucuronate = 3-deoxy-D-glycero-2,5-hexodiulosonate. It participates in glycan metabolism; pectin degradation; 2-dehydro-3-deoxy-D-gluconate from pectin: step 4/5. Catalyzes the isomerization of 5-dehydro-4-deoxy-D-glucuronate to 3-deoxy-D-glycero-2,5-hexodiulosonate. The sequence is that of 4-deoxy-L-threo-5-hexosulose-uronate ketol-isomerase from Edwardsiella ictaluri (strain 93-146).